The following is a 666-amino-acid chain: Non-receptor tyrosine-protein kinase TNK1 (666 aa).

Ser-96 carries the phosphoserine modification. Positions 116–383 constitute a Protein kinase domain; sequence VRRGELLGSG…LEGLLQEAWL (268 aa). Residues 122 to 130 and Lys-148 each bind ATP; that span reads LGSGCFGVV. Asp-245 serves as the catalytic Proton acceptor. Position 255 is a phosphoserine (Ser-255). An SH3 domain is found at 381–441; sequence AWLSEGRCVR…PASAVTLADL (61 aa). The interval 442 to 589 is disordered; the sequence is GGSPVTHPAH…VPSGGPLSDP (148 aa). Basic and acidic residues predominate over residues 457–473; the sequence is HGEKCRGGTDGDREKAT. The residue at position 498 (Ser-498) is a Phosphoserine. Thr-510 carries the post-translational modification Phosphothreonine. Ser-515 carries the phosphoserine modification. Residues 531 to 544 are compositionally biased toward pro residues; it reads DLPPRPPDLPPRPP. At Ser-582 the chain carries Phosphoserine.

This sequence belongs to the protein kinase superfamily. Tyr protein kinase family. In terms of assembly, interacts with the SH3 domain of PLCG1 via its Pro-rich domain. Autophosphorylated on tyrosine residues. Expressed in whole embryo and all adult tissues examined including liver, kidney, heart, brain, skeletal muscle and intestine. Also detected in various myeloid- and lymphoid-derived cell lines.

It is found in the membrane. The protein localises to the cytoplasm. It carries out the reaction L-tyrosyl-[protein] + ATP = O-phospho-L-tyrosyl-[protein] + ADP + H(+). In terms of biological role, may function in signaling pathways utilized broadly during fetal development and more selectively in adult tissues and in cells of the lymphohematopoietic system. Could specifically be involved in phospholipid signal transduction. Involved in negative regulation of cell growth. Has tumor suppressor properties. Plays a negative regulatory role in the Ras-MAPK pathway. In Mus musculus (Mouse), this protein is Non-receptor tyrosine-protein kinase TNK1.